The primary structure comprises 373 residues: Homoserine O-acetyltransferase (373 aa).

The AB hydrolase-1 domain maps to 46–355; the sequence is NAILICHPLT…NPNGHDSFLL (310 aa). Catalysis depends on S151, which acts as the Nucleophile. R221 provides a ligand contact to substrate. Residues D317 and H350 contribute to the active site. D351 contacts substrate.

Belongs to the AB hydrolase superfamily. MetX family. Homodimer.

It is found in the cytoplasm. It catalyses the reaction L-homoserine + acetyl-CoA = O-acetyl-L-homoserine + CoA. Its pathway is amino-acid biosynthesis; L-methionine biosynthesis via de novo pathway; O-acetyl-L-homoserine from L-homoserine: step 1/1. In terms of biological role, transfers an acetyl group from acetyl-CoA to L-homoserine, forming acetyl-L-homoserine. The sequence is that of Homoserine O-acetyltransferase from Zymomonas mobilis subsp. mobilis (strain ATCC 31821 / ZM4 / CP4).